A 578-amino-acid polypeptide reads, in one-letter code: Tetratricopeptide repeat protein ttc-39B (578 aa).

3 TPR repeats span residues 297-330 (AIML…QDVY), 481-514 (CLYY…ESSI), and 522-554 (PNAT…YKSY).

The polypeptide is Tetratricopeptide repeat protein ttc-39B (Caenorhabditis elegans).